The chain runs to 24 residues: ATIEVYNILPYYYYVSKAWSWNGN.

It localises to the secreted. Its subcellular location is the cell wall. This Nicotiana tabacum (Common tobacco) protein is 47 kDa cell wall protein.